We begin with the raw amino-acid sequence, 146 residues long: Large ribosomal subunit protein uL23m (146 aa).

Residues 108 to 146 are disordered; that stretch reads PDLFPEKEPTSPDPLEEELPQQRQSSDPRCPGIPSWFGL.

The protein belongs to the universal ribosomal protein uL23 family. In terms of assembly, component of the mitochondrial ribosome large subunit (39S) which comprises a 16S rRNA and about 50 distinct proteins.

The protein localises to the mitochondrion. The chain is Large ribosomal subunit protein uL23m (Mrpl23) from Rattus norvegicus (Rat).